A 261-amino-acid chain; its full sequence is MYKDLEGKVVVITGSSTGLGKSMAIRFATEKAKVVVNYRSKEDEANSVLEEIKKVGGEAIAVKGDVTVESDVINLVQSAIKEFGKLDVMINNAGLENPVSSHEMSLSDWNKVIDTNLTGAFLGSREAIKYFVENDIKGTVINMSSVHEKIPWPLFVHYAASKGGMKLMTETLALEYAPKGIRVNNIGPGAINTPINAEKFADPEQRADVESMIPMGYIGEPEEIAAVAAWLASSEASYVTGITLFADGGMTQYPSFQAGRG.

11–35 (VITGSSTGLGKSMAIRFATEKAKVV) lines the NADP(+) pocket. Substrate is bound at residue Ser145. Catalysis depends on Tyr158, which acts as the Proton acceptor.

This sequence belongs to the short-chain dehydrogenases/reductases (SDR) family. Homotetramer.

It catalyses the reaction D-glucose + NAD(+) = D-glucono-1,5-lactone + NADH + H(+). It carries out the reaction D-glucose + NADP(+) = D-glucono-1,5-lactone + NADPH + H(+). The chain is Glucose 1-dehydrogenase from Priestia megaterium (Bacillus megaterium).